The chain runs to 226 residues: Thymidylate kinase (226 aa).

16–23 (GIDGAGKT) is an ATP binding site.

It belongs to the thymidylate kinase family.

It carries out the reaction dTMP + ATP = dTDP + ADP. Phosphorylation of dTMP to form dTDP in both de novo and salvage pathways of dTTP synthesis. The chain is Thymidylate kinase from Xanthomonas euvesicatoria pv. vesicatoria (strain 85-10) (Xanthomonas campestris pv. vesicatoria).